The chain runs to 88 residues: Small ribosomal subunit protein uS15c (88 aa).

The protein belongs to the universal ribosomal protein uS15 family. In terms of assembly, part of the 30S ribosomal subunit.

It localises to the plastid. The protein resides in the chloroplast. The polypeptide is Small ribosomal subunit protein uS15c (rps15) (Aethionema grandiflorum (Persian stone-cress)).